Consider the following 298-residue polypeptide: ATP phosphoribosyltransferase (298 aa).

The protein belongs to the ATP phosphoribosyltransferase family. Long subfamily. The cofactor is Mg(2+).

The protein resides in the cytoplasm. It carries out the reaction 1-(5-phospho-beta-D-ribosyl)-ATP + diphosphate = 5-phospho-alpha-D-ribose 1-diphosphate + ATP. The protein operates within amino-acid biosynthesis; L-histidine biosynthesis; L-histidine from 5-phospho-alpha-D-ribose 1-diphosphate: step 1/9. With respect to regulation, feedback inhibited by histidine. Functionally, catalyzes the condensation of ATP and 5-phosphoribose 1-diphosphate to form N'-(5'-phosphoribosyl)-ATP (PR-ATP). Has a crucial role in the pathway because the rate of histidine biosynthesis seems to be controlled primarily by regulation of HisG enzymatic activity. The protein is ATP phosphoribosyltransferase of Aeromonas salmonicida (strain A449).